Consider the following 114-residue polypeptide: Large ribosomal subunit protein eL30 (114 aa).

The protein belongs to the eukaryotic ribosomal protein eL30 family.

This is Large ribosomal subunit protein eL30 (RPL30) from Branchiostoma belcheri (Amphioxus).